The following is a 655-amino-acid chain: Putative esterase (655 aa).

Residues 9-29 form a helical membrane-spanning segment; sequence VLSLTLIYISISIGFSVYFYV. N-linked (GlcNAc...) asparagine; by host glycosylation is found at Asn-71, Asn-89, Asn-101, Asn-185, Asn-386, Asn-449, and Asn-512. His-515 functions as the Charge relay system in the catalytic mechanism. N-linked (GlcNAc...) asparagine; by host glycans are attached at residues Asn-527 and Asn-597.

This sequence belongs to the type-B carboxylesterase/lipase family.

It is found in the membrane. It catalyses the reaction a carboxylic ester + H2O = an alcohol + a carboxylate + H(+). The chain is Putative esterase from Noctuidae (owlet moths).